Reading from the N-terminus, the 856-residue chain is DNA mismatch repair protein MutS (856 aa).

ATP is bound at residue 618–625 (GPNMGGKS).

Belongs to the DNA mismatch repair MutS family.

In terms of biological role, this protein is involved in the repair of mismatches in DNA. It is possible that it carries out the mismatch recognition step. This protein has a weak ATPase activity. The protein is DNA mismatch repair protein MutS of Shewanella baltica (strain OS185).